Reading from the N-terminus, the 171-residue chain is Probable chorismate pyruvate-lyase (171 aa).

Substrate is bound by residues Met-36, Arg-78, Leu-116, and Glu-157.

It belongs to the UbiC family.

Its subcellular location is the cytoplasm. It carries out the reaction chorismate = 4-hydroxybenzoate + pyruvate. It participates in cofactor biosynthesis; ubiquinone biosynthesis. In terms of biological role, removes the pyruvyl group from chorismate, with concomitant aromatization of the ring, to provide 4-hydroxybenzoate (4HB) for the ubiquinone pathway. The sequence is that of Probable chorismate pyruvate-lyase from Bartonella henselae (strain ATCC 49882 / DSM 28221 / CCUG 30454 / Houston 1) (Rochalimaea henselae).